A 526-amino-acid polypeptide reads, in one-letter code: Glucomannan 4-beta-mannosyltransferase 1 (526 aa).

The chain crosses the membrane as a helical span at residues 31-51; that stretch reads VIIPLLKLAVIVCSVMSIMLF. The active site involves Asp130. The substrate site is built by Asp189 and Asp191. The active site involves Asp283. The next 4 membrane-spanning stretches (helical) occupy residues 362–382, 399–419, 477–497, and 501–521; these read IVAHWVTFFFYCIVIPACVIV, ITILNAVSTPRSMHLLVLWIL, PLEIIVGMYMLHCATYDLLFG, and FFVYLLLQAGAFFTMGFGLVG.

It belongs to the glycosyltransferase 2 family. Plant cellulose synthase-like A subfamily.

It is found in the golgi apparatus membrane. The enzyme catalyses GDP-mannose + (glucomannan)n = GDP + (glucomannan)n+1.. Possesses 4-beta-mannosyltransferase activity on mannan using GDP-mannose. The beta-1,4-mannan product is the backbone for galactomannan synthesis by galactomannan galactosyltransferase. The galactomannan is a hemicellulosic storage polysaccharide accumulated in the form of secondary wall thickenings in the seed endosperm. This Cyamopsis tetragonoloba (Guar) protein is Glucomannan 4-beta-mannosyltransferase 1.